The primary structure comprises 278 residues: ATP synthase subunit a (278 aa).

Helical transmembrane passes span 41–61, 108–128, 149–168, 180–200, 222–242, and 244–264; these read FLNIDSLFFSFFLGIIFLLFF, LTIFVWLFLMNLMDLIPVDFV, INITLSMSLGVFLLILYFGI, FFFQPFNNYLLIPVNLVLELI, LIFILISGLLPWWLQWILSVP, and AIFHILIIILQAFIFMILTII.

The protein belongs to the ATPase A chain family. In terms of assembly, F-type ATPases have 2 components, CF(1) - the catalytic core - and CF(0) - the membrane proton channel. CF(1) has five subunits: alpha(3), beta(3), gamma(1), delta(1), epsilon(1). CF(0) has three main subunits: a(1), b(2) and c(9-12). The alpha and beta chains form an alternating ring which encloses part of the gamma chain. CF(1) is attached to CF(0) by a central stalk formed by the gamma and epsilon chains, while a peripheral stalk is formed by the delta and b chains.

It localises to the cell membrane. In terms of biological role, key component of the proton channel; it plays a direct role in the translocation of protons across the membrane. In Wigglesworthia glossinidia brevipalpis, this protein is ATP synthase subunit a.